Reading from the N-terminus, the 368-residue chain is Phospho-N-acetylmuramoyl-pentapeptide-transferase (368 aa).

A run of 9 helical transmembrane segments spans residues 30–50 (AAAI…IAYL), 72–92 (LPTM…FLWA), 99–119 (VWLV…DDYL), 135–155 (LIGQ…DPSM), 170–190 (LTIN…TAIS), 201–221 (GLAA…AYLA), 238–258 (GGEV…FLWF), 265–286 (IIMG…ALLI), and 345–365 (KIVI…LMTL).

Belongs to the glycosyltransferase 4 family. MraY subfamily. It depends on Mg(2+) as a cofactor.

The protein localises to the cell inner membrane. It carries out the reaction UDP-N-acetyl-alpha-D-muramoyl-L-alanyl-gamma-D-glutamyl-meso-2,6-diaminopimeloyl-D-alanyl-D-alanine + di-trans,octa-cis-undecaprenyl phosphate = di-trans,octa-cis-undecaprenyl diphospho-N-acetyl-alpha-D-muramoyl-L-alanyl-D-glutamyl-meso-2,6-diaminopimeloyl-D-alanyl-D-alanine + UMP. It participates in cell wall biogenesis; peptidoglycan biosynthesis. Its function is as follows. Catalyzes the initial step of the lipid cycle reactions in the biosynthesis of the cell wall peptidoglycan: transfers peptidoglycan precursor phospho-MurNAc-pentapeptide from UDP-MurNAc-pentapeptide onto the lipid carrier undecaprenyl phosphate, yielding undecaprenyl-pyrophosphoryl-MurNAc-pentapeptide, known as lipid I. This is Phospho-N-acetylmuramoyl-pentapeptide-transferase from Chlorobium chlorochromatii (strain CaD3).